Here is a 181-residue protein sequence, read N- to C-terminus: Protein GrpE (181 aa).

A compositionally biased stretch (polar residues) spans 1 to 13 (MENTQENPATQSA). Residues 1–39 (MENTQENPATQSAEDIGSEKQAAQGAAPAAEAADAALAE) are disordered. Residues 21-39 (QAAQGAAPAAEAADAALAE) are compositionally biased toward low complexity.

The protein belongs to the GrpE family. In terms of assembly, homodimer.

The protein localises to the cytoplasm. Functionally, participates actively in the response to hyperosmotic and heat shock by preventing the aggregation of stress-denatured proteins, in association with DnaK and GrpE. It is the nucleotide exchange factor for DnaK and may function as a thermosensor. Unfolded proteins bind initially to DnaJ; upon interaction with the DnaJ-bound protein, DnaK hydrolyzes its bound ATP, resulting in the formation of a stable complex. GrpE releases ADP from DnaK; ATP binding to DnaK triggers the release of the substrate protein, thus completing the reaction cycle. Several rounds of ATP-dependent interactions between DnaJ, DnaK and GrpE are required for fully efficient folding. This Burkholderia lata (strain ATCC 17760 / DSM 23089 / LMG 22485 / NCIMB 9086 / R18194 / 383) protein is Protein GrpE.